We begin with the raw amino-acid sequence, 84 residues long: Cell division topological specificity factor (84 aa).

The protein belongs to the MinE family.

Prevents the cell division inhibition by proteins MinC and MinD at internal division sites while permitting inhibition at polar sites. This ensures cell division at the proper site by restricting the formation of a division septum at the midpoint of the long axis of the cell. This Pseudomonas fluorescens (strain SBW25) protein is Cell division topological specificity factor.